The following is a 95-amino-acid chain: Integration host factor subunit beta (95 aa).

Belongs to the bacterial histone-like protein family. Heterodimer of an alpha and a beta chain.

Functionally, this protein is one of the two subunits of integration host factor, a specific DNA-binding protein that functions in genetic recombination as well as in transcriptional and translational control. This is Integration host factor subunit beta from Shewanella halifaxensis (strain HAW-EB4).